A 351-amino-acid polypeptide reads, in one-letter code: Phosphate acetyltransferase (351 aa).

It belongs to the phosphate acetyltransferase and butyryltransferase family.

It is found in the cytoplasm. It carries out the reaction acetyl-CoA + phosphate = acetyl phosphate + CoA. Its pathway is metabolic intermediate biosynthesis; acetyl-CoA biosynthesis; acetyl-CoA from acetate: step 2/2. This is Phosphate acetyltransferase (pta) from Rickettsia prowazekii (strain Madrid E).